Here is a 230-residue protein sequence, read N- to C-terminus: Enolase-phosphatase E1 (230 aa).

It belongs to the HAD-like hydrolase superfamily. MasA/MtnC family. In terms of assembly, monomer. Requires Mg(2+) as cofactor.

The catalysed reaction is 5-methylsulfanyl-2,3-dioxopentyl phosphate + H2O = 1,2-dihydroxy-5-(methylsulfanyl)pent-1-en-3-one + phosphate. Its pathway is amino-acid biosynthesis; L-methionine biosynthesis via salvage pathway; L-methionine from S-methyl-5-thio-alpha-D-ribose 1-phosphate: step 3/6. It participates in amino-acid biosynthesis; L-methionine biosynthesis via salvage pathway; L-methionine from S-methyl-5-thio-alpha-D-ribose 1-phosphate: step 4/6. Bifunctional enzyme that catalyzes the enolization of 2,3-diketo-5-methylthiopentyl-1-phosphate (DK-MTP-1-P) into the intermediate 2-hydroxy-3-keto-5-methylthiopentenyl-1-phosphate (HK-MTPenyl-1-P), which is then dephosphorylated to form the acireductone 1,2-dihydroxy-3-keto-5-methylthiopentene (DHK-MTPene). The polypeptide is Enolase-phosphatase E1 (Bradyrhizobium sp. (strain BTAi1 / ATCC BAA-1182)).